Consider the following 495-residue polypeptide: Angiopoietin-2 (495 aa).

The first 18 residues, Met-1 to Ala-18, serve as a signal peptide directing secretion. N-linked (GlcNAc...) asparagine glycosylation is found at Asn-88, Asn-118, Asn-132, Asn-150, Asn-239, and Asn-303. The stretch at Ser-165 to Gln-247 forms a coiled coil. The Fibrinogen C-terminal domain occupies Lys-274–Asp-494. The cysteines at positions 283 and 312 are disulfide-linked. Residues Asp-428, Asp-430, Cys-432, and Cys-434 each contribute to the Ca(2+) site. 2 disulfide bridges follow: Cys-432–Cys-434 and Cys-436–Cys-449.

In terms of assembly, interacts with TEK/TIE2, competing for the same binding site as ANGPT1. Interacts with ITGA5. Interacts with SVEP1/polydom. Interacts with THBD; this interaction significantly inhibits the generation of activated PC and TAFIa/CPB2 by the thrombin/thrombomodulin complex.

It is found in the secreted. Its function is as follows. Binds to TEK/TIE2, competing for the ANGPT1 binding site, and modulating ANGPT1 signaling. Can induce tyrosine phosphorylation of TEK/TIE2 in the absence of ANGPT1. In the absence of angiogenic inducers, such as VEGF, ANGPT2-mediated loosening of cell-matrix contacts may induce endothelial cell apoptosis with consequent vascular regression. In concert with VEGF, it may facilitate endothelial cell migration and proliferation, thus serving as a permissive angiogenic signal. Involved in the regulation of lymphangiogenesis. The chain is Angiopoietin-2 (ANGPT2) from Canis lupus familiaris (Dog).